Consider the following 522-residue polypeptide: TNF receptor-associated factor 6 (522 aa).

The interval 1 to 354 is interaction with TAX1BP1; it reads MSLLNCENSC…EAQQCNGIYI (354 aa). The RING-type; degenerate zinc-finger motif lies at 70 to 109; that stretch reads CPICLMALREAVQTPCGHRFCKACIIKSIRDAGHKCPVDN. Lys-124 is covalently cross-linked (Glycyl lysine isopeptide (Lys-Gly) (interchain with G-Cter in SUMO); alternate). Lys-124 is covalently cross-linked (Glycyl lysine isopeptide (Lys-Gly) (interchain with G-Cter in ubiquitin); alternate). Lys-142 is covalently cross-linked (Glycyl lysine isopeptide (Lys-Gly) (interchain with G-Cter in SUMO)). 2 consecutive TRAF-type zinc fingers follow at residues 150–202 and 203–259; these read DHQA…EDKE and IHDQ…NHLA. The stretch at 288-348 forms a coiled coil; it reads YVSEVRNFQE…DKVAEIEAQQ (61 aa). Lys-319 participates in a covalent cross-link: Glycyl lysine isopeptide (Lys-Gly) (interchain with G-Cter in ubiquitin). Positions 350–499 constitute an MATH domain; the sequence is NGIYIWKIGN…DDTLLVRCEV (150 aa). Residues 355–522 are interaction with TANK; that stretch reads WKIGNFGMHL…FQPRSTDSGV (168 aa). Lys-453 participates in a covalent cross-link: Glycyl lysine isopeptide (Lys-Gly) (interchain with G-Cter in SUMO).

This sequence belongs to the TNF receptor-associated factor family. A subfamily. As to quaternary structure, homotrimer. Homooligomer. N-terminal region is dimeric while C-terminal region is trimeric; maybe providing a mode of oligomerization. Upon IL1B treatment, forms a complex with PELI1, IRAK1, IRAK4 and MYD88; this complex recruits MAP3K7/TAK1, TAB1 and TAB2 to mediate NF-kappa-B activation. Direct binding of SMAD6 to PELI1 prevents the complex formation and hence negatively regulates IL1R-TLR signaling and eventually NF-kappa-B-mediated gene expression. Binds to TNFRSF5/CD40 and TNFRSF11A/RANK. Associates with NGFR, TNFRSF17, IRAK2, IRAK3, RIPK2, MAP3K1, MAP3K5, MAP3K14, CSK, TRAF, TRAF-interacting protein TRIP and TNF receptor associated protein TDP2. Interacts with IL17R. Interacts with SQSTM1 bridging NTRK1 and NGFR. Forms a ternary complex with SQSTM1 and PRKCZ. Interacts with PELI2 and PELI3. Binds UBE2V1. Interacts with TAX1BP1; this interaction mediates deubiquitination of TRAF6 and inhibition of NF-kappa-B activation. Interacts with ZNF675. Interacts with ARRB1 and ARRB2. Interacts with MAP3K7 and TAB1/MAP3K7IP1; during IL-1 signaling. Interacts with UBE2N. Interacts with TGFBR1, HDAC1 and RANGAP1. Interacts with AKT1, AKT2 and AKT3. Interacts (via TRAF domains) with NUMBL (via C-terminal). Interacts with RBCK1. Interacts with LIMD1 (via LIM domains). Interacts with RSAD2/viperin. Interacts (via C-terminus) with EIF2AK2/PKR (via the kinase catalytic domain). Interacts with ZFAND5. Interacts with IL1RL1. Interacts with TRAFD1. Interacts with AJUBA. Interacts with MAVS/IPS1. Interacts (via TRAF domains) with DYNC2I2 (via WD domains). Interacts with IFIT3 (via N-terminus). Interacts with TICAM2. Interacts with CARD14. Interacts with CD40 and MAP3K8; the interaction is required for ERK activation. Interacts with TICAM1 and this interaction is enhanced in the presence of WDFY1. Interacts with TANK; this interaction increases in response to DNA damage. Interacts with USP10; this interaction increases in response to DNA damage. Interacts with ZC3H12A; this interaction increases in response to DNA damage and is stimulated by TANK. Interacts with WDFY3. Interacts with TRIM13. Interacts with GPS2. Interacts (via C-terminus) with SASH1. Interacts with LRRC19. Interacts with IL17RA and TRAF3IP2. Interacts with TOMM70. Interacts with AMBRA1; interaction is required to mediate 'Lys-63'-linked ubiquitination of ULK1. Interacts with CRBN; this interaction inhibits TLR4-mediated signaling by preventing TRAF6-mediated ubiquitination of ECSIT. Post-translationally, sumoylated on Lys-124, Lys-142 and Lys-453 with SUMO1. Polyubiquitinated on Lys-124 by TRAF3IP2; after cell stimulation with IL17A. Polyubiquitinated on Lys-124; after cell stimulation with IL1B or TGFB. This ligand-induced cell stimulation leads to dimerization/oligomerization of TRAF6 molecules, followed by auto-ubiquitination which involves UBE2N and UBE2V1 and leads to TRAF6 activation. This 'Lys-63' site-specific poly-ubiquitination appears to be associated with the activation of signaling molecules. Deubiquitinated by USP10 in a TANK-dependent manner, leading to the negative regulation of NF-kappa-B signaling upon DNA damage. LRRC19 induces 'Lys-63' ubiquitination. Ubiquitinated at Lys-319 by the SCF(FBXL2) complex, leading to its degradation by the proteasome.

The protein resides in the cytoplasm. Its subcellular location is the cell cortex. It is found in the nucleus. It localises to the lipid droplet. The catalysed reaction is S-ubiquitinyl-[E2 ubiquitin-conjugating enzyme]-L-cysteine + [acceptor protein]-L-lysine = [E2 ubiquitin-conjugating enzyme]-L-cysteine + N(6)-ubiquitinyl-[acceptor protein]-L-lysine.. It functions in the pathway protein modification; protein ubiquitination. E3 ubiquitin ligase that, together with UBE2N and UBE2V1, mediates the synthesis of 'Lys-63'-linked-polyubiquitin chains conjugated to proteins, such as ECSIT, IKBKG, IRAK1, AKT1 and AKT2. Also mediates ubiquitination of free/unanchored polyubiquitin chain that leads to MAP3K7 activation. Leads to the activation of NF-kappa-B and JUN. Seems to also play a role in dendritic cells (DCs) maturation and/or activation. Represses c-Myb-mediated transactivation, in B-lymphocytes. Adapter protein that seems to play a role in signal transduction initiated via TNF receptor, IL-1 receptor and IL-17 receptor. Regulates osteoclast differentiation by mediating the activation of adapter protein complex 1 (AP-1) and NF-kappa-B, in response to RANK-L stimulation. Together with MAP3K8, mediates CD40 signals that activate ERK in B-cells and macrophages, and thus may play a role in the regulation of immunoglobulin production. Acts as a regulator of the JNK and NF-kappa-B signaling pathways by initiating assembly of heterotypic 'Lys-63'-/'Lys-48'-linked branched ubiquitin chains that are then recognized by TAB2: TRAF6 catalyzes initial 'Lys-63'-linked-polyubiquitin chains that are then branched via 'Lys-48'-linked polyubiquitin by HUWE1. 'Lys-63'-/'Lys-48'-linked branched ubiquitin chains protect 'Lys-63'-linkages from CYLD deubiquitination. Also participates in the TCR signaling by ubiquitinating LAT. This is TNF receptor-associated factor 6 (TRAF6) from Cercocebus atys (Sooty mangabey).